We begin with the raw amino-acid sequence, 257 residues long: Hydroxyethylthiazole kinase (257 aa).

Methionine 42 contributes to the substrate binding site. ATP is bound by residues arginine 117 and threonine 163. Residue alanine 190 coordinates substrate.

This sequence belongs to the Thz kinase family. It depends on Mg(2+) as a cofactor.

It carries out the reaction 5-(2-hydroxyethyl)-4-methylthiazole + ATP = 4-methyl-5-(2-phosphooxyethyl)-thiazole + ADP + H(+). Its pathway is cofactor biosynthesis; thiamine diphosphate biosynthesis; 4-methyl-5-(2-phosphoethyl)-thiazole from 5-(2-hydroxyethyl)-4-methylthiazole: step 1/1. Its function is as follows. Catalyzes the phosphorylation of the hydroxyl group of 4-methyl-5-beta-hydroxyethylthiazole (THZ). The protein is Hydroxyethylthiazole kinase of Roseobacter denitrificans (strain ATCC 33942 / OCh 114) (Erythrobacter sp. (strain OCh 114)).